The following is a 413-amino-acid chain: von Willebrand factor A domain-containing protein 1 (413 aa).

An N-terminal signal peptide occupies residues 1–20; that stretch reads MLPWTVIGLALSLRLARSGA. The 180-residue stretch at 32 to 211 folds into the VWFA domain; the sequence is DLLFLLDSSA…ALRGSILDAM (180 aa). Phosphoserine occurs at positions 72, 78, and 91. Fibronectin type-III domains are found at residues 212–302 and 305–395; these read WPQQ…TLPE and GPEL…TPEG. The N-linked (GlcNAc...) asparagine glycan is linked to N262. Residues 385 to 413 are disordered; sequence ALSAKACTPEGERSRAPRPQPQRTGGREP.

Homodimer or homomultimer; disulfide-linked. Interacts with HSPG2. N-glycosylated.

The protein resides in the secreted. The protein localises to the extracellular space. It localises to the extracellular matrix. Its subcellular location is the basement membrane. In terms of biological role, promotes matrix assembly. Involved in the organization of skeletal muscles and in the formation of neuromuscular junctions. In Bos taurus (Bovine), this protein is von Willebrand factor A domain-containing protein 1 (VWA1).